A 145-amino-acid polypeptide reads, in one-letter code: MIALIQRVLNASVTVEGQTVGNIGPGLLVLLGVEQDDNEQKAVRLCERVLGYRIFGDENDKMNLNVQQAGGSLLVVSQFTLVADTQKGMRPSFSRGAVPQEADRLYQYFVGQCRERGIETQTGEFAADMKVALVNDGPVTFWLQV.

The Gly-cisPro motif, important for rejection of L-amino acids motif lies at 137-138 (GP).

This sequence belongs to the DTD family. Homodimer.

The protein localises to the cytoplasm. It carries out the reaction glycyl-tRNA(Ala) + H2O = tRNA(Ala) + glycine + H(+). The catalysed reaction is a D-aminoacyl-tRNA + H2O = a tRNA + a D-alpha-amino acid + H(+). An aminoacyl-tRNA editing enzyme that deacylates mischarged D-aminoacyl-tRNAs. Also deacylates mischarged glycyl-tRNA(Ala), protecting cells against glycine mischarging by AlaRS. Acts via tRNA-based rather than protein-based catalysis; rejects L-amino acids rather than detecting D-amino acids in the active site. By recycling D-aminoacyl-tRNA to D-amino acids and free tRNA molecules, this enzyme counteracts the toxicity associated with the formation of D-aminoacyl-tRNA entities in vivo and helps enforce protein L-homochirality. This chain is D-aminoacyl-tRNA deacylase, found in Serratia proteamaculans (strain 568).